We begin with the raw amino-acid sequence, 156 residues long: Small ribosomal subunit protein uS7 (156 aa).

The protein belongs to the universal ribosomal protein uS7 family. In terms of assembly, part of the 30S ribosomal subunit. Contacts proteins S9 and S11.

Functionally, one of the primary rRNA binding proteins, it binds directly to 16S rRNA where it nucleates assembly of the head domain of the 30S subunit. Is located at the subunit interface close to the decoding center, probably blocks exit of the E-site tRNA. This is Small ribosomal subunit protein uS7 from Mycoplasmopsis synoviae (strain 53) (Mycoplasma synoviae).